A 466-amino-acid chain; its full sequence is Bifunctional protein GlmU (466 aa).

The segment at 1–233 (MLHKSVLGLV…ADEAMGANDR (233 aa)) is pyrophosphorylase. UDP-N-acetyl-alpha-D-glucosamine contacts are provided by residues 11-14 (LAAG), K25, Q79, and 84-85 (GT). D108 is a Mg(2+) binding site. G143, E158, N173, and N231 together coordinate UDP-N-acetyl-alpha-D-glucosamine. Mg(2+) is bound at residue N231. Positions 234 to 254 (AQLAALEAVYRQRKVQELFAQ) are linker. Residues 255 to 466 (GVTLIDPNRI…QKKKEHKNDA (212 aa)) are N-acetyltransferase. R337 and K355 together coordinate UDP-N-acetyl-alpha-D-glucosamine. H367 functions as the Proton acceptor in the catalytic mechanism. Residues Y370 and N381 each coordinate UDP-N-acetyl-alpha-D-glucosamine. Acetyl-CoA-binding positions include A384, 390–391 (NY), S409, A427, and R444.

In the N-terminal section; belongs to the N-acetylglucosamine-1-phosphate uridyltransferase family. This sequence in the C-terminal section; belongs to the transferase hexapeptide repeat family. In terms of assembly, homotrimer. Mg(2+) is required as a cofactor.

The protein resides in the cytoplasm. It carries out the reaction alpha-D-glucosamine 1-phosphate + acetyl-CoA = N-acetyl-alpha-D-glucosamine 1-phosphate + CoA + H(+). It catalyses the reaction N-acetyl-alpha-D-glucosamine 1-phosphate + UTP + H(+) = UDP-N-acetyl-alpha-D-glucosamine + diphosphate. It participates in nucleotide-sugar biosynthesis; UDP-N-acetyl-alpha-D-glucosamine biosynthesis; N-acetyl-alpha-D-glucosamine 1-phosphate from alpha-D-glucosamine 6-phosphate (route II): step 2/2. Its pathway is nucleotide-sugar biosynthesis; UDP-N-acetyl-alpha-D-glucosamine biosynthesis; UDP-N-acetyl-alpha-D-glucosamine from N-acetyl-alpha-D-glucosamine 1-phosphate: step 1/1. The protein operates within bacterial outer membrane biogenesis; LPS lipid A biosynthesis. In terms of biological role, catalyzes the last two sequential reactions in the de novo biosynthetic pathway for UDP-N-acetylglucosamine (UDP-GlcNAc). The C-terminal domain catalyzes the transfer of acetyl group from acetyl coenzyme A to glucosamine-1-phosphate (GlcN-1-P) to produce N-acetylglucosamine-1-phosphate (GlcNAc-1-P), which is converted into UDP-GlcNAc by the transfer of uridine 5-monophosphate (from uridine 5-triphosphate), a reaction catalyzed by the N-terminal domain. This Dichelobacter nodosus (strain VCS1703A) protein is Bifunctional protein GlmU.